The primary structure comprises 226 residues: Xanthocillin biosynthesis cluster protein F (226 aa).

The protein operates within secondary metabolite biosynthesis. Functionally, part of the gene cluster that mediates the biosynthesis of the isocyanide xanthocillin and its derivatives. The first step of the pathway consists in the conversion of tyrosine into a vinyl-isonitrile intermediate by the isocyanide synthase xanB. Subsequent oxidative dimerization of this intermediate to form xanthocillin may involve the cytochrome P450 monooxygenase xanG, whose expression is coregulated with that of XanB. Xanthocillin can be further modified by the isonitrile hydratase-like protein xanA which introduces N-formyl groups and the methyltransferase xanE which introduces methyl groups, leading to the production of several derivatives including fumiformamide. Finally, fumiformamide can be subject to both oxidative and reductive cyclization to yield melanocins E and F, respectively. The polypeptide is Xanthocillin biosynthesis cluster protein F (Aspergillus fumigatus (strain ATCC MYA-4609 / CBS 101355 / FGSC A1100 / Af293) (Neosartorya fumigata)).